The sequence spans 473 residues: Bifunctional protein GlmU (473 aa).

Positions 1–241 are pyrophosphorylase; it reads MATQPTPLTA…VGSLVGINDR (241 aa). UDP-N-acetyl-alpha-D-glucosamine-binding positions include 13-16, K27, Q84, and 89-90; these read LAAG and GT. D114 contacts Mg(2+). Positions 152, 167, 182, and 239 each coordinate UDP-N-acetyl-alpha-D-glucosamine. N239 contacts Mg(2+). Residues 242–262 form a linker region; the sequence is AQLAAAEEVLYGRIADRLRKS. An N-acetyltransferase region spans residues 263–473; the sequence is GVTIRTSARI…KARLKDAAKK (211 aa). Residues R343 and K361 each contribute to the UDP-N-acetyl-alpha-D-glucosamine site. H373 acts as the Proton acceptor in catalysis. Y376 and N387 together coordinate UDP-N-acetyl-alpha-D-glucosamine. Acetyl-CoA contacts are provided by residues A390, 396–397, S415, T433, and R450; that span reads NY.

In the N-terminal section; belongs to the N-acetylglucosamine-1-phosphate uridyltransferase family. It in the C-terminal section; belongs to the transferase hexapeptide repeat family. Homotrimer. The cofactor is Mg(2+).

It localises to the cytoplasm. It catalyses the reaction alpha-D-glucosamine 1-phosphate + acetyl-CoA = N-acetyl-alpha-D-glucosamine 1-phosphate + CoA + H(+). The catalysed reaction is N-acetyl-alpha-D-glucosamine 1-phosphate + UTP + H(+) = UDP-N-acetyl-alpha-D-glucosamine + diphosphate. It participates in nucleotide-sugar biosynthesis; UDP-N-acetyl-alpha-D-glucosamine biosynthesis; N-acetyl-alpha-D-glucosamine 1-phosphate from alpha-D-glucosamine 6-phosphate (route II): step 2/2. Its pathway is nucleotide-sugar biosynthesis; UDP-N-acetyl-alpha-D-glucosamine biosynthesis; UDP-N-acetyl-alpha-D-glucosamine from N-acetyl-alpha-D-glucosamine 1-phosphate: step 1/1. The protein operates within bacterial outer membrane biogenesis; LPS lipid A biosynthesis. Functionally, catalyzes the last two sequential reactions in the de novo biosynthetic pathway for UDP-N-acetylglucosamine (UDP-GlcNAc). The C-terminal domain catalyzes the transfer of acetyl group from acetyl coenzyme A to glucosamine-1-phosphate (GlcN-1-P) to produce N-acetylglucosamine-1-phosphate (GlcNAc-1-P), which is converted into UDP-GlcNAc by the transfer of uridine 5-monophosphate (from uridine 5-triphosphate), a reaction catalyzed by the N-terminal domain. The protein is Bifunctional protein GlmU of Sorangium cellulosum (strain So ce56) (Polyangium cellulosum (strain So ce56)).